The following is a 599-amino-acid chain: Elongation factor 4 (599 aa).

The tr-type G domain maps to 5 to 187 (SHIRNFSIIA…ALVNGIPAPV (183 aa)). Residues 17-22 (DHGKST) and 134-137 (NKMD) contribute to the GTP site.

It belongs to the TRAFAC class translation factor GTPase superfamily. Classic translation factor GTPase family. LepA subfamily.

It localises to the cell inner membrane. The catalysed reaction is GTP + H2O = GDP + phosphate + H(+). Its function is as follows. Required for accurate and efficient protein synthesis under certain stress conditions. May act as a fidelity factor of the translation reaction, by catalyzing a one-codon backward translocation of tRNAs on improperly translocated ribosomes. Back-translocation proceeds from a post-translocation (POST) complex to a pre-translocation (PRE) complex, thus giving elongation factor G a second chance to translocate the tRNAs correctly. Binds to ribosomes in a GTP-dependent manner. The sequence is that of Elongation factor 4 from Teredinibacter turnerae (strain ATCC 39867 / T7901).